The chain runs to 166 residues: 3-isopropylmalate dehydratase small subunit (166 aa).

This sequence belongs to the LeuD family. LeuD type 2 subfamily. As to quaternary structure, heterodimer of LeuC and LeuD.

The enzyme catalyses (2R,3S)-3-isopropylmalate = (2S)-2-isopropylmalate. Its pathway is amino-acid biosynthesis; L-leucine biosynthesis; L-leucine from 3-methyl-2-oxobutanoate: step 2/4. Catalyzes the isomerization between 2-isopropylmalate and 3-isopropylmalate, via the formation of 2-isopropylmaleate. This is 3-isopropylmalate dehydratase small subunit from Moorella thermoacetica (strain ATCC 39073 / JCM 9320).